The sequence spans 808 residues: Sucrose synthase 2 (808 aa).

Ser-10 bears the Phosphoserine; by CPK mark. The interval 272–749 is GT-B glycosyltransferase; it reads MMFNVVILSP…GLQRIYEKYT (478 aa).

This sequence belongs to the glycosyltransferase 1 family. Plant sucrose synthase subfamily. As to quaternary structure, homotetramer or heterotetramer with SUS1. Phosphorylated at Ser-10 by CPK23 in developing seeds. Predominantly expressed in the leaf tissues. Expressed in seeds, and at lower levels in roots. Expressed in leaf mesophyll and phloem (at protein level).

The catalysed reaction is an NDP-alpha-D-glucose + D-fructose = a ribonucleoside 5'-diphosphate + sucrose + H(+). Activated by phosphorylation at Ser-10 by CPK23. Functionally, sucrose-cleaving enzyme that provides UDP-glucose and fructose for various metabolic pathways. Functions in developing seeds by supplying substrates for the biosynthesis of storage products. This Oryza sativa subsp. japonica (Rice) protein is Sucrose synthase 2 (SUS2).